We begin with the raw amino-acid sequence, 219 residues long: Elongation factor Ts, chloroplastic (219 aa).

Belongs to the EF-Ts family.

It localises to the plastid. It is found in the chloroplast. Functionally, associates with the EF-Tu.GDP complex and induces the exchange of GDP to GTP. It remains bound to the aminoacyl-tRNA.EF-Tu.GTP complex up to the GTP hydrolysis stage on the ribosome. In Guillardia theta (Cryptophyte), this protein is Elongation factor Ts, chloroplastic (tsf).